The chain runs to 158 residues: Protein-export protein SecB (158 aa).

This sequence belongs to the SecB family. As to quaternary structure, homotetramer, a dimer of dimers. One homotetramer interacts with 1 SecA dimer.

The protein resides in the cytoplasm. In terms of biological role, one of the proteins required for the normal export of preproteins out of the cell cytoplasm. It is a molecular chaperone that binds to a subset of precursor proteins, maintaining them in a translocation-competent state. It also specifically binds to its receptor SecA. The protein is Protein-export protein SecB of Rhodopseudomonas palustris (strain BisB5).